A 1719-amino-acid polypeptide reads, in one-letter code: Cilia- and flagella-associated protein 43 (1719 aa).

A disordered region spans residues 94-120; that stretch reads VREEGAGGGADKPSGSGAVSGKQQSSG. WD repeat units follow at residues 122–165, 174–214, 226–263, 308–345, 413–452, and 513–552; these read SVVL…GRCR, SSTS…EKAV, PAGA…PLQL, TSGA…AAAI, CHVG…LLGR, and LHSA…GRVR. The segment at 569-596 is disordered; it reads TWPRSDGGSGAASGHAQAGPVSTTSAEG. 2 WD repeats span residues 697 to 736 and 749 to 788; these read AHAR…LAAQ and ITAG…AVAN. The tract at residues 1022-1045 is disordered; that stretch reads RAKQEAARKADEDAAKRSAKDNAG. The stretch at 1073–1114 is one WD 9 repeat; it reads PKPAWLVALGVEPDAVNPKLITEEQNRELKEWQAKEKSLQEE. Disordered stretches follow at residues 1220–1269, 1277–1296, and 1325–1372; these read MPGG…AAAA, ATAA…GAAG, and TLNP…AAAA. A compositionally biased stretch (gly residues) spans 1221 to 1233; sequence PGGGAIGAAGGHQ. Over residues 1257–1269 the composition is skewed to low complexity; it reads ASLAHSPSGAAAA. Residues 1344–1358 are compositionally biased toward low complexity; that stretch reads SSALHPSHSHASVHG. 2 coiled-coil regions span residues 1524-1609 and 1651-1679; these read AAQW…RSAQ and HKKL…RLRT. Residues 1685-1719 form a disordered region; it reads ESGAVAGMPSPPRRLPPDIKLLAGSPSSSSVAGRT. A compositionally biased stretch (polar residues) spans 1709-1719; that stretch reads SPSSSSVAGRT.

Belongs to the CFAP43 family.

Its subcellular location is the cell projection. The protein resides in the cilium. The protein localises to the flagellum. It is found in the cytoplasm. It localises to the cytoskeleton. Its subcellular location is the flagellum axoneme. Flagellar protein involved in flagellum axoneme organization and function. The polypeptide is Cilia- and flagella-associated protein 43 (Chlamydomonas reinhardtii (Chlamydomonas smithii)).